The following is a 93-amino-acid chain: Sec-independent protein translocase protein TatA (93 aa).

A helical transmembrane segment spans residues 1 to 21 (MGAMSPWHWAIVALVVVILFG). The segment at 44 to 93 (KEMQNDNSTPAPTAQQSAPAELPVADTTTAPVTPPAPVQPQPQHTEPKSA) is disordered. Low complexity predominate over residues 51–74 (STPAPTAQQSAPAELPVADTTTAP).

This sequence belongs to the TatA/E family. In terms of assembly, the Tat system comprises two distinct complexes: a TatABC complex, containing multiple copies of TatA, TatB and TatC subunits, and a separate TatA complex, containing only TatA subunits. Substrates initially bind to the TatABC complex, which probably triggers association of the separate TatA complex to form the active translocon.

Its subcellular location is the cell membrane. Functionally, part of the twin-arginine translocation (Tat) system that transports large folded proteins containing a characteristic twin-arginine motif in their signal peptide across membranes. TatA could form the protein-conducting channel of the Tat system. The polypeptide is Sec-independent protein translocase protein TatA (Rhodococcus opacus (strain B4)).